A 346-amino-acid polypeptide reads, in one-letter code: SUMO-activating enzyme subunit 1 (346 aa).

Position 1 is an N-acetylmethionine (Met-1). Residue Val-2 is modified to N-acetylvaline; in SUMO-activating enzyme subunit 1, N-terminally processed. Ser-12 carries the phosphoserine modification. Lys-198 is modified (N6-acetyllysine).

This sequence belongs to the ubiquitin-activating E1 family. Heterodimer of SAE1 and UBA2/SAE2. The heterodimer corresponds to the two domains that are encoded on a single polypeptide chain in ubiquitin-activating enzyme E1. Interacts with UBE2I.

It localises to the nucleus. It functions in the pathway protein modification; protein sumoylation. Its function is as follows. The heterodimer acts as an E1 ligase for SUMO1, SUMO2, SUMO3, and probably SUMO4. It mediates ATP-dependent activation of SUMO proteins followed by formation of a thioester bond between a SUMO protein and a conserved active site cysteine residue on UBA2/SAE2. The protein is SUMO-activating enzyme subunit 1 (SAE1) of Bos taurus (Bovine).